The following is a 597-amino-acid chain: Probable methyltransferase-like protein 25 (597 aa).

A compositionally biased stretch (basic and acidic residues) spans 245–254 (ECKGDAESVQ). Disordered regions lie at residues 245–265 (ECKG…DLSA) and 317–342 (TSSQ…KARD). Polar residues predominate over residues 317-326 (TSSQVQNTEK).

Probable methyltransferase. This chain is Probable methyltransferase-like protein 25 (Mettl25), found in Mus musculus (Mouse).